A 748-amino-acid polypeptide reads, in one-letter code: Junctophilin-3 (748 aa).

Over methionine 1 to isoleucine 727 the chain is Cytoplasmic. MORN repeat units follow at residues tyrosine 15–glycine 37, tyrosine 39–threonine 60, tyrosine 61–valine 82, tyrosine 83–alanine 105, tyrosine 107–threonine 129, and tyrosine 130–methionine 152. Residues serine 230 to aspartate 259 form a disordered region. Residues lysine 231 to phenylalanine 244 are compositionally biased toward low complexity. Residues glycine 249–aspartate 259 show a composition bias toward polar residues. MORN repeat units follow at residues tyrosine 288–lysine 310 and tyrosine 311–lysine 333. The tract at residues alanine 416–asparagine 496 is disordered. Serine 440 bears the Phosphoserine mark. Over residues serine 448–serine 457 the composition is skewed to polar residues. Residue threonine 451 is modified to Phosphothreonine. The residue at position 457 (serine 457) is a Phosphoserine. At threonine 471 the chain carries Phosphothreonine. Residues serine 475 and serine 506 each carry the phosphoserine modification. 2 disordered regions span residues cysteine 526–glycine 597 and histidine 624–glycine 649. The segment covering leucine 639–glycine 649 has biased composition (basic and acidic residues). 2 positions are modified to phosphoserine: serine 703 and serine 710. A helical; Anchor for type IV membrane protein transmembrane segment spans residues leucine 728–isoleucine 748.

The protein belongs to the junctophilin family. Specifically expressed in brain.

The protein resides in the cell membrane. Its subcellular location is the endoplasmic reticulum membrane. In terms of biological role, junctophilins contribute to the formation of junctional membrane complexes (JMCs) which link the plasma membrane with the endoplasmic or sarcoplasmic reticulum in excitable cells. Provides a structural foundation for functional cross-talk between the cell surface and intracellular calcium release channels. JPH3 is brain-specific and appears to have an active role in certain neurons involved in motor coordination and memory. This is Junctophilin-3 (JPH3) from Homo sapiens (Human).